The sequence spans 173 residues: Calcium-binding protein 5 (173 aa).

EF-hand domains follow at residues 28–63, 82–99, 105–140, and 142–173; these read DELDELREAFLEFDKDQDGFISYKDLGNLMRTMGYM, GRVDFEDFVELMTPKLLA, IGVQEMRDAFKEFDANGDGEITLAELQQAMQRLLGE, and LTPREIAEVVQEADINGDGTVDFEEFVKMMSR. Residues D41, D43, D45, and D52 each coordinate Ca(2+). Positions 118, 120, 122, 124, 129, 155, 157, 159, 161, and 166 each coordinate Ca(2+).

In terms of assembly, interacts with CACNA1C (via C-terminal CDB motif) in a calcium-dependent manner. Interacts with STXBP1. Interacts with MYO6. In terms of tissue distribution, expressed in inner and outer plexiform layers of the retina, and retinal bipolar cells (at protein level). Expressed in the inner hair cells (IHC) of the cochlea.

Its subcellular location is the cytoplasm. Functionally, inhibits calcium-dependent inactivation of L-type calcium channel and shifts voltage dependence of activation to more depolarized membrane potentials. Involved in the transmission of light signals. May positively regulate neurotransmitter vesicle endocytosis and exocytosis in a salt-dependent manner. May play a role in the extension and network organization of neurites. The chain is Calcium-binding protein 5 (Cabp5) from Mus musculus (Mouse).